A 225-amino-acid polypeptide reads, in one-letter code: Suppressor of cytokine signaling 3 (225 aa).

The tract at residues 22 to 33 (LKTFSSKSEYQL) is kinase inhibitory region (KIR). An extended SH2 subdomain (ESS) region spans residues 34–45 (VVNAVCKLQESG). Residues 46-142 (FYWSAVTGGE…APSFPAPPTE (97 aa)) enclose the SH2 domain. The span at 131–142 (PGAPSFPAPPTE) shows a compositional bias: pro residues. The tract at residues 131–162 (PGAPSFPAPPTEPSSEVSEQPPSQPLPGNPPR) is disordered. In terms of domain architecture, SOCS box spans 177-224 (VLSRPLSSNVATLQHLCRKTVNGHLDSYEKVTQLPGAIREFLDQYDAP).

In terms of assembly, interacts with multiple activated proteins of the tyrosine kinase signaling pathway including IGF1 receptor, insulin receptor and JAK2. Binding to JAK2 is mediated through the KIR and SH2 domains to a phosphorylated tyrosine residue within the JAK2 JH1 domain. Binds specific activated tyrosine residues of the leptin, EPO, IL12, GSCF and gp130 receptors. Interaction with CSNK1E stabilizes SOCS3 protein. Component of the probable ECS(SOCS3) E3 ubiquitin-protein ligase complex which contains CUL5, RNF7/RBX2, Elongin BC complex and SOCS3. Interacts with CUL5, RNF7, ELOB and ELOC. Interacts with FGFR3. Interacts with INSR. Interacts with BCL10; this interaction may interfere with BCL10-binding with PELI2. Interacts with NOD2 (via CARD domain); the interaction promotes NOD2 degradation. Phosphorylated on tyrosine residues after stimulation by the cytokines, IL-2, EPO or IGF1.

It functions in the pathway protein modification; protein ubiquitination. In terms of biological role, SOCS family proteins form part of a classical negative feedback system that regulates cytokine signal transduction. SOCS3 is involved in negative regulation of cytokines that signal through the JAK/STAT pathway. Inhibits cytokine signal transduction by binding to tyrosine kinase receptors including IL6ST/gp130, LIF, erythropoietin, insulin, IL12, GCSF and leptin receptors. Binding to JAK2 inhibits its kinase activity and regulates IL6 signaling. Suppresses fetal liver erythropoiesis. Regulates onset and maintenance of allergic responses mediated by T-helper type 2 cells. Probable substrate recognition component of a SCF-like ECS (Elongin BC-CUL2/5-SOCS-box protein) E3 ubiquitin-protein ligase complex which mediates the ubiquitination and subsequent proteasomal degradation of target proteins. The protein is Suppressor of cytokine signaling 3 (SOCS3) of Canis lupus familiaris (Dog).